The chain runs to 227 residues: MLITIDDVLSPEELAQARKLIAASRWVSGHVTAGPQALHSKNNEQLPEDAEHLPALRRLILGALNRNPLFFAAALPLRVLTPFFNRYAGDSNHYGYHTDNAMRLAPEGGYVRADVSATVFLSDPEEYEGGVLTIADTFGTHGVKLKAGSAVVYPSSSIHQVTPVTAGARVACFMFMQSMVRDAHQRRLLFDMDMALLQLRQSVGEDNDAVVRLTGTYHNLLRLWADA.

A Fe2OG dioxygenase domain is found at 78–178 (RVLTPFFNRY…RVACFMFMQS (101 aa)). Histidine 97, aspartate 99, and histidine 159 together coordinate Fe cation. Arginine 169 is a binding site for 2-oxoglutarate.

It depends on Fe(2+) as a cofactor. L-ascorbate serves as cofactor.

The polypeptide is PKHD-type hydroxylase azo0608 (Azoarcus sp. (strain BH72)).